The sequence spans 388 residues: 4-hydroxy-3-methylbut-2-en-1-yl diphosphate synthase (flavodoxin) (388 aa).

Residues cysteine 281, cysteine 284, cysteine 316, and glutamate 323 each contribute to the [4Fe-4S] cluster site.

This sequence belongs to the IspG family. [4Fe-4S] cluster is required as a cofactor.

It carries out the reaction (2E)-4-hydroxy-3-methylbut-2-enyl diphosphate + oxidized [flavodoxin] + H2O + 2 H(+) = 2-C-methyl-D-erythritol 2,4-cyclic diphosphate + reduced [flavodoxin]. It participates in isoprenoid biosynthesis; isopentenyl diphosphate biosynthesis via DXP pathway; isopentenyl diphosphate from 1-deoxy-D-xylulose 5-phosphate: step 5/6. Its function is as follows. Converts 2C-methyl-D-erythritol 2,4-cyclodiphosphate (ME-2,4cPP) into 1-hydroxy-2-methyl-2-(E)-butenyl 4-diphosphate. The sequence is that of 4-hydroxy-3-methylbut-2-en-1-yl diphosphate synthase (flavodoxin) from Paenarthrobacter aurescens (strain TC1).